The primary structure comprises 279 residues: Biotin synthase (279 aa).

The 227-residue stretch at methionine 1 to arginine 227 folds into the Radical SAM core domain. [4Fe-4S] cluster contacts are provided by cysteine 16, cysteine 20, and cysteine 23. The [2Fe-2S] cluster site is built by cysteine 60, cysteine 95, and cysteine 153.

The protein belongs to the radical SAM superfamily. Biotin synthase family. In terms of assembly, homodimer. [4Fe-4S] cluster is required as a cofactor. It depends on [2Fe-2S] cluster as a cofactor.

It catalyses the reaction (4R,5S)-dethiobiotin + (sulfur carrier)-SH + 2 reduced [2Fe-2S]-[ferredoxin] + 2 S-adenosyl-L-methionine = (sulfur carrier)-H + biotin + 2 5'-deoxyadenosine + 2 L-methionine + 2 oxidized [2Fe-2S]-[ferredoxin]. The protein operates within cofactor biosynthesis; biotin biosynthesis; biotin from 7,8-diaminononanoate: step 2/2. Catalyzes the conversion of dethiobiotin (DTB) to biotin by the insertion of a sulfur atom into dethiobiotin via a radical-based mechanism. The chain is Biotin synthase from Nitratiruptor sp. (strain SB155-2).